Here is a 387-residue protein sequence, read N- to C-terminus: Patatin group A-3 (387 aa).

The N-terminal stretch at Met1–Ala23 is a signal peptide. Residues Leu32 to Val230 enclose the PNPLA domain. The short motif at Gly36–Gly41 is the GXGXXG element. Residues Gly75–Gly79 carry the GXSXG motif. Catalysis depends on Ser77, which acts as the Nucleophile. N-linked (GlcNAc...) asparagine glycosylation is present at Asn115. The active-site Proton acceptor is Asp216. A DGA/G motif is present at residues Asp216–Ala218. A coiled-coil region spans residues Glu361–Ala385.

The protein belongs to the patatin family. Tuber and stolon.

The protein resides in the vacuole. In terms of biological role, probable lipolytic acyl hydrolase (LAH), an activity which is thought to be involved in the response of tubers to pathogens. The polypeptide is Patatin group A-3 (Solanum tuberosum (Potato)).